Here is a 294-residue protein sequence, read N- to C-terminus: ATP synthase gamma chain (294 aa).

Belongs to the ATPase gamma chain family. F-type ATPases have 2 components, CF(1) - the catalytic core - and CF(0) - the membrane proton channel. CF(1) has five subunits: alpha(3), beta(3), gamma(1), delta(1), epsilon(1). CF(0) has three main subunits: a, b and c.

It is found in the cell inner membrane. Functionally, produces ATP from ADP in the presence of a proton gradient across the membrane. The gamma chain is believed to be important in regulating ATPase activity and the flow of protons through the CF(0) complex. The polypeptide is ATP synthase gamma chain (Campylobacter jejuni subsp. jejuni serotype O:6 (strain 81116 / NCTC 11828)).